The primary structure comprises 173 residues: MTYFVLFLGLCFVLGGLAVASNPSPYYGVVGLVLASVAGCGWLLSLGVSFVSLVLFMVYLGGMLVVFVYSVSLAADPFPEAWGDWGVVGYGVGFVVVLVAGLIVGGSIGSLDFGVVTVDSVGMFSVRLDFGGVAMFYSCGVGMLLVAGWGLLLTLFVVLELVRGLSRGAIRAV.

Helical transmembrane passes span 1–21, 27–47, 48–68, 85–105, 106–126, and 139–159; these read MTYFVLFLGLCFVLGGLAVAS, YGVVGLVLASVAGCGWLLSLG, VSFVSLVLFMVYLGGMLVVFV, WGVVGYGVGFVVVLVAGLIVG, GSIGSLDFGVVTVDSVGMFSV, and CGVGMLLVAGWGLLLTLFVVL.

It belongs to the complex I subunit 6 family.

Its subcellular location is the mitochondrion membrane. It carries out the reaction a ubiquinone + NADH + 5 H(+)(in) = a ubiquinol + NAD(+) + 4 H(+)(out). Its function is as follows. Core subunit of the mitochondrial membrane respiratory chain NADH dehydrogenase (Complex I) that is believed to belong to the minimal assembly required for catalysis. Complex I functions in the transfer of electrons from NADH to the respiratory chain. The immediate electron acceptor for the enzyme is believed to be ubiquinone. In Aethia psittacula (Parakeet auklet), this protein is NADH-ubiquinone oxidoreductase chain 6 (MT-ND6).